Here is a 464-residue protein sequence, read N- to C-terminus: ATP synthase subunit beta (464 aa).

An ATP-binding site is contributed by 153 to 160 (GGAGVGKT).

This sequence belongs to the ATPase alpha/beta chains family. F-type ATPases have 2 components, CF(1) - the catalytic core - and CF(0) - the membrane proton channel. CF(1) has five subunits: alpha(3), beta(3), gamma(1), delta(1), epsilon(1). CF(0) has three main subunits: a(1), b(2) and c(9-12). The alpha and beta chains form an alternating ring which encloses part of the gamma chain. CF(1) is attached to CF(0) by a central stalk formed by the gamma and epsilon chains, while a peripheral stalk is formed by the delta and b chains.

It localises to the cell inner membrane. The enzyme catalyses ATP + H2O + 4 H(+)(in) = ADP + phosphate + 5 H(+)(out). Produces ATP from ADP in the presence of a proton gradient across the membrane. The catalytic sites are hosted primarily by the beta subunits. The chain is ATP synthase subunit beta from Burkholderia ambifaria (strain MC40-6).